We begin with the raw amino-acid sequence, 173 residues long: Large ribosomal subunit protein uL10 (173 aa).

The protein belongs to the universal ribosomal protein uL10 family. Part of the ribosomal stalk of the 50S ribosomal subunit. The N-terminus interacts with L11 and the large rRNA to form the base of the stalk. The C-terminus forms an elongated spine to which L12 dimers bind in a sequential fashion forming a multimeric L10(L12)X complex.

Functionally, forms part of the ribosomal stalk, playing a central role in the interaction of the ribosome with GTP-bound translation factors. This is Large ribosomal subunit protein uL10 from Chlorobium phaeobacteroides (strain BS1).